The primary structure comprises 473 residues: Siroheme synthase 2 (473 aa).

The segment at 1–204 is precorrin-2 dehydrogenase /sirohydrochlorin ferrochelatase; it reads MDYFPIFCQL…NDHVQADQHV (204 aa). Residues 22–23 and 43–44 each bind NAD(+); these read EI and CE. Ser-128 carries the post-translational modification Phosphoserine. The segment at 216–473 is uroporphyrinogen-III C-methyltransferase; that stretch reads GEVVLVGAGP…KVTECVAHVG (258 aa). Residue Pro-225 participates in S-adenosyl-L-methionine binding. The active-site Proton acceptor is the Asp-248. Catalysis depends on Lys-270, which acts as the Proton donor. Residues 301–303, Ile-306, 331–332, Met-382, and Gly-411 each bind S-adenosyl-L-methionine; these read GGD and TA.

This sequence in the N-terminal section; belongs to the precorrin-2 dehydrogenase / sirohydrochlorin ferrochelatase family. In the C-terminal section; belongs to the precorrin methyltransferase family.

The catalysed reaction is uroporphyrinogen III + 2 S-adenosyl-L-methionine = precorrin-2 + 2 S-adenosyl-L-homocysteine + H(+). It catalyses the reaction precorrin-2 + NAD(+) = sirohydrochlorin + NADH + 2 H(+). The enzyme catalyses siroheme + 2 H(+) = sirohydrochlorin + Fe(2+). It participates in cofactor biosynthesis; adenosylcobalamin biosynthesis; precorrin-2 from uroporphyrinogen III: step 1/1. It functions in the pathway cofactor biosynthesis; adenosylcobalamin biosynthesis; sirohydrochlorin from precorrin-2: step 1/1. The protein operates within porphyrin-containing compound metabolism; siroheme biosynthesis; precorrin-2 from uroporphyrinogen III: step 1/1. Its pathway is porphyrin-containing compound metabolism; siroheme biosynthesis; siroheme from sirohydrochlorin: step 1/1. It participates in porphyrin-containing compound metabolism; siroheme biosynthesis; sirohydrochlorin from precorrin-2: step 1/1. Its function is as follows. Multifunctional enzyme that catalyzes the SAM-dependent methylations of uroporphyrinogen III at position C-2 and C-7 to form precorrin-2 via precorrin-1. Then it catalyzes the NAD-dependent ring dehydrogenation of precorrin-2 to yield sirohydrochlorin. Finally, it catalyzes the ferrochelation of sirohydrochlorin to yield siroheme. This is Siroheme synthase 2 from Yersinia pseudotuberculosis serotype O:1b (strain IP 31758).